A 345-amino-acid chain; its full sequence is 3'-5' exoribonuclease 1 (345 aa).

Basic and acidic residues-rich tracts occupy residues 1–11 (MEDERGREHGG) and 19–40 (PRPE…CRLD). The interval 1 to 40 (MEDERGREHGGDAAQQKTPRPECEESRPLSVEKKQRCRLD) is disordered. A Phosphoserine modification is found at Ser-58. The SAP domain occupies 72–106 (INRMSKEELRAKLSEFKLETRGVKDVLKKRLKNYY). Positions 126 to 302 (ICIIDFEATC…DDSKNIARIA (177 aa)) constitute an Exonuclease domain. Positions 130 and 132 each coordinate Mg(2+). The Proton acceptor role is filled by Glu-132. Glu-132 and Ala-133 together coordinate AMP. A Mg(2+)-binding site is contributed by Asp-230. Residue His-289 is the Proton acceptor of the active site. His-289 lines the AMP pocket. Asp-294 lines the Mg(2+) pocket.

In terms of assembly, identified in a histone pre-mRNA complex, at least composed of ERI1, LSM11, SLBP, SNRPB, SYNCRIP and YBX1. Binds to 40S and 60S ribosomal subunits and to 80S assembled ribosomes. Interacts in a cooperative manner with SLBP to the mature 3'-end of histone mRNAs. Found in a ternary complex with SLBP and the stem-loop structure of the 3'-end of histone mRNAs. Requires Mg(2+) as cofactor.

It is found in the cytoplasm. The protein resides in the nucleus. The protein localises to the nucleolus. The enzyme catalyses Exonucleolytic cleavage in the 3'- to 5'-direction to yield nucleoside 5'-phosphates.. With respect to regulation, although it can bind simultaneously with SLBP to the 3'-end of histone mRNA, the presence of SLBP prevents the exonuclease activity. Functionally, RNA exonuclease that binds to the 3'-end of histone mRNAs and degrades them, suggesting that it plays an essential role in histone mRNA decay after replication. A 2' and 3'-hydroxyl groups at the last nucleotide of the histone 3'-end is required for efficient 3'-end histone mRNA exonuclease activity and degradation of RNA substrates. Also able to degrade the 3'-overhangs of short interfering RNAs (siRNAs) in vitro, suggesting a possible role as regulator of RNA interference (RNAi). Required for binding the 5'-ACCCA-3' sequence present in stem-loop structure. Able to bind other mRNAs. Required for 5.8S rRNA 3'-end processing. Also binds to 5.8s ribosomal RNA. Binds with high affinity to the stem-loop structure of replication-dependent histone pre-mRNAs. In vitro, does not have sequence specificity. In vitro, has weak DNA exonuclease activity. In vitro, shows biphasic kinetics such that there is rapid hydrolysis of the last three unpaired RNA nucleotides in the 39 flanking sequence followed by a much slower cleavage through the stem that occurs over a longer incubation period in the order of hours. ERI1-mediated RNA metabolism plays a key role in chondrogenesis. The polypeptide is 3'-5' exoribonuclease 1 (Eri1) (Rattus norvegicus (Rat)).